Reading from the N-terminus, the 119-residue chain is Small ribosomal subunit protein uS13 (119 aa).

Residues 92–110 (RKDTCKRSTKKNARTRKGP) are compositionally biased toward basic residues. The segment at 92 to 119 (RKDTCKRSTKKNARTRKGPKKDNRWKER) is disordered.

It belongs to the universal ribosomal protein uS13 family. Part of the 30S ribosomal subunit. Forms a loose heterodimer with protein S19. Forms two bridges to the 50S subunit in the 70S ribosome.

Functionally, located at the top of the head of the 30S subunit, it contacts several helices of the 16S rRNA. In the 70S ribosome it contacts the 23S rRNA (bridge B1a) and protein L5 of the 50S subunit (bridge B1b), connecting the 2 subunits; these bridges are implicated in subunit movement. Contacts the tRNAs in the A and P-sites. The chain is Small ribosomal subunit protein uS13 from Mycoplasma sp.